Here is a 60-residue protein sequence, read N- to C-terminus: MGKIKVTKVKSAINRTKNQKLVLESLGLKKIGQTVEHDDTPNILGMVNKVKHLVSVEETK.

The protein belongs to the universal ribosomal protein uL30 family. As to quaternary structure, part of the 50S ribosomal subunit.

The polypeptide is Large ribosomal subunit protein uL30 (Christiangramia forsetii (strain DSM 17595 / CGMCC 1.15422 / KT0803) (Gramella forsetii)).